A 151-amino-acid polypeptide reads, in one-letter code: UPF0208 membrane protein KPN78578_26420 (151 aa).

2 helical membrane passes run 46–65 and 69–91; these read YAIR…QIAL and LGPA…WWLG.

This sequence belongs to the UPF0208 family.

It localises to the cell inner membrane. This is UPF0208 membrane protein KPN78578_26420 from Klebsiella pneumoniae subsp. pneumoniae (strain ATCC 700721 / MGH 78578).